The sequence spans 165 residues: Phosphopantetheine adenylyltransferase (165 aa).

Substrate is bound at residue Thr11. Residues 11 to 12 (TF) and His19 each bind ATP. Lys43, Thr79, and Arg93 together coordinate substrate. Residues Glu104 and 128–134 (LEPLNST) contribute to the ATP site.

This sequence belongs to the bacterial CoaD family. As to quaternary structure, homohexamer. Mg(2+) serves as cofactor.

It is found in the cytoplasm. The catalysed reaction is (R)-4'-phosphopantetheine + ATP + H(+) = 3'-dephospho-CoA + diphosphate. Its pathway is cofactor biosynthesis; coenzyme A biosynthesis; CoA from (R)-pantothenate: step 4/5. Functionally, reversibly transfers an adenylyl group from ATP to 4'-phosphopantetheine, yielding dephospho-CoA (dPCoA) and pyrophosphate. The sequence is that of Phosphopantetheine adenylyltransferase from Lactococcus lactis subsp. lactis (strain IL1403) (Streptococcus lactis).